Reading from the N-terminus, the 565-residue chain is Adenine deaminase 1 (565 aa).

Belongs to the metallo-dependent hydrolases superfamily. Adenine deaminase family. The cofactor is Mn(2+).

The enzyme catalyses adenine + H2O + H(+) = hypoxanthine + NH4(+). The polypeptide is Adenine deaminase 1 (Rhizobium etli (strain ATCC 51251 / DSM 11541 / JCM 21823 / NBRC 15573 / CFN 42)).